The sequence spans 527 residues: Laccase-5 (527 aa).

Positions 1-23 (MGKYHSFVNVVALSLSLSGRVFG) are cleaved as a signal peptide. Residues 25–150 (IGPVTDLTIS…DGLRGPLVVY (126 aa)) enclose the Plastocyanin-like 1 domain. 2 N-linked (GlcNAc...) asparagine glycosylation sites follow: asparagine 74 and asparagine 77. Positions 87, 89, 132, and 134 each coordinate Cu cation. Intrachain disulfides connect cysteine 108–cysteine 516 and cysteine 140–cysteine 230. N-linked (GlcNAc...) asparagine glycosylation is found at asparagine 156, asparagine 209, asparagine 233, asparagine 242, asparagine 276, asparagine 317, asparagine 358, asparagine 366, asparagine 393, and asparagine 402. The Plastocyanin-like 2 domain occupies 162–306 (VDDDTTVITL…GGVNSAILRY (145 aa)). Residues 373-498 (TVPVLLQILS…AGFAIVWGED (126 aa)) form the Plastocyanin-like 3 domain. 7 residues coordinate Cu cation: histidine 425, histidine 428, histidine 430, histidine 480, cysteine 481, histidine 482, and histidine 486.

The protein belongs to the multicopper oxidase family. As to quaternary structure, homodimer. Requires Cu cation as cofactor.

The protein localises to the secreted. It catalyses the reaction 4 hydroquinone + O2 = 4 benzosemiquinone + 2 H2O. In terms of biological role, lignin degradation and detoxification of lignin-derived products. This is Laccase-5 (LCC5) from Trametes villosa (White-rot fungus).